The following is a 73-amino-acid chain: Putative antitoxin VapB18 (73 aa).

Belongs to the UPF0330 family.

Its function is as follows. Possibly the antitoxin component of a type II toxin-antitoxin (TA) system. Its cognate toxin is VapC18 (Potential). In Archaeoglobus fulgidus (strain ATCC 49558 / DSM 4304 / JCM 9628 / NBRC 100126 / VC-16), this protein is Putative antitoxin VapB18 (vapB18).